A 128-amino-acid polypeptide reads, in one-letter code: Holo-[acyl-carrier-protein] synthase (128 aa).

Residues Asp8 and Glu57 each coordinate Mg(2+).

The protein belongs to the P-Pant transferase superfamily. AcpS family. Mg(2+) serves as cofactor.

The protein localises to the cytoplasm. It catalyses the reaction apo-[ACP] + CoA = holo-[ACP] + adenosine 3',5'-bisphosphate + H(+). Transfers the 4'-phosphopantetheine moiety from coenzyme A to a Ser of acyl-carrier-protein. In Syntrophus aciditrophicus (strain SB), this protein is Holo-[acyl-carrier-protein] synthase.